We begin with the raw amino-acid sequence, 138 residues long: Probable phospholipase A2 homolog 1 (138 aa).

The first 21 residues, 1–21 (MPPRSPLLALVFLAAGVLSSA), serve as a signal peptide directing secretion. 6 disulfide bridges follow: Cys-29/Cys-56, Cys-33/Cys-62, Cys-38/Cys-109, Cys-49/Cys-69, Cys-68/Cys-93, and Cys-75/Cys-86. Residues Tyr-48, Gly-50, and Trp-53 each coordinate Ca(2+). The active site involves His-72. Asp-73 provides a ligand contact to Ca(2+).

Belongs to the phospholipase A2 family. The cofactor is Ca(2+).

The protein resides in the secreted. It carries out the reaction a 1,2-diacyl-sn-glycero-3-phosphocholine + H2O = a 1-acyl-sn-glycero-3-phosphocholine + a fatty acid + H(+). Functionally, PA2 catalyzes the calcium-dependent hydrolysis of the 2-acyl groups in 3-sn-phosphoglycerides. Releases lysophospholipids (LPLs) and free fatty acids (FFAs) from membrane phospholipids in response to hormones and other external stimuli. The polypeptide is Probable phospholipase A2 homolog 1 (PLA2-I) (Oryza sativa subsp. japonica (Rice)).